A 155-amino-acid chain; its full sequence is 3-hydroxyacyl-[acyl-carrier-protein] dehydratase FabZ (155 aa).

His-61 is an active-site residue.

This sequence belongs to the thioester dehydratase family. FabZ subfamily.

Its subcellular location is the cytoplasm. It carries out the reaction a (3R)-hydroxyacyl-[ACP] = a (2E)-enoyl-[ACP] + H2O. Its function is as follows. Involved in unsaturated fatty acids biosynthesis. Catalyzes the dehydration of short chain beta-hydroxyacyl-ACPs and long chain saturated and unsaturated beta-hydroxyacyl-ACPs. The chain is 3-hydroxyacyl-[acyl-carrier-protein] dehydratase FabZ from Synechococcus sp. (strain ATCC 27144 / PCC 6301 / SAUG 1402/1) (Anacystis nidulans).